A 322-amino-acid polypeptide reads, in one-letter code: Serine protease Lpg1137 (322 aa).

Residue Ser68 is part of the active site.

The protein localises to the secreted. It is found in the host mitochondrion membrane. Serine protease effector that inhibits host cell autophagy by targeting SNX17. Localizes to the host endoplasmic reticulum-mitochondria contact site and catalyzes degradation of host SNX17, thereby impairing endoplasmic reticulum-mitochondria communication, leading to inhibit autophagy as well as staurosporine-induced apoptosis. In Legionella pneumophila subsp. pneumophila (strain Philadelphia 1 / ATCC 33152 / DSM 7513), this protein is Serine protease Lpg1137.